Here is a 152-residue protein sequence, read N- to C-terminus: Ribosomal RNA large subunit methyltransferase H (152 aa).

Residues Leu-65, Gly-96, and 115-120 (LGPMTW) each bind S-adenosyl-L-methionine.

It belongs to the RNA methyltransferase RlmH family. As to quaternary structure, homodimer.

It is found in the cytoplasm. The enzyme catalyses pseudouridine(1915) in 23S rRNA + S-adenosyl-L-methionine = N(3)-methylpseudouridine(1915) in 23S rRNA + S-adenosyl-L-homocysteine + H(+). In terms of biological role, specifically methylates the pseudouridine at position 1915 (m3Psi1915) in 23S rRNA. The sequence is that of Ribosomal RNA large subunit methyltransferase H from Gluconacetobacter diazotrophicus (strain ATCC 49037 / DSM 5601 / CCUG 37298 / CIP 103539 / LMG 7603 / PAl5).